The sequence spans 240 residues: Methylthioribulose-1-phosphate dehydratase (240 aa).

Cysteine 103 serves as a coordination point for substrate. Residues histidine 121 and histidine 123 each coordinate Zn(2+). Glutamate 144 (proton donor/acceptor) is an active-site residue. Histidine 200 serves as a coordination point for Zn(2+).

This sequence belongs to the aldolase class II family. MtnB subfamily. The cofactor is Zn(2+).

It localises to the cytoplasm. The catalysed reaction is 5-(methylsulfanyl)-D-ribulose 1-phosphate = 5-methylsulfanyl-2,3-dioxopentyl phosphate + H2O. Its pathway is amino-acid biosynthesis; L-methionine biosynthesis via salvage pathway; L-methionine from S-methyl-5-thio-alpha-D-ribose 1-phosphate: step 2/6. Its function is as follows. Catalyzes the dehydration of methylthioribulose-1-phosphate (MTRu-1-P) into 2,3-diketo-5-methylthiopentyl-1-phosphate (DK-MTP-1-P). This Komagataella phaffii (strain GS115 / ATCC 20864) (Yeast) protein is Methylthioribulose-1-phosphate dehydratase.